Here is a 468-residue protein sequence, read N- to C-terminus: ERO1-like protein alpha (468 aa).

An N-terminal signal peptide occupies residues 1 to 23; that stretch reads MGRGWGFLFGLLGAVWLLSSGHG. 8 disulfide bridges follow: C35-C48, C37-C46, C85-C391, C94-C99, C94-C131, C99-C104, C208-C241, and C394-C397. Phosphoserine occurs at positions 106 and 143. Position 145 is a phosphoserine; by FAM20C (S145). Residues R187, T189, and W200 each contribute to the FAD site. Positions 252 and 255 each coordinate FAD. N280 carries an N-linked (GlcNAc...) asparagine glycan. Residues R287 and R300 each coordinate FAD. Residue N384 is glycosylated (N-linked (GlcNAc...) asparagine).

Belongs to the EROs family. As to quaternary structure, predominantly monomer. May function both as a monomer and a homodimer. Interacts with PDILT. Interacts with ERP44; the interaction results in retention of ERO1A in the endoplasmic reticulum. The cofactor is FAD. N-glycosylated. In terms of processing, the Cys-94/Cys-99 and Cys-394/Cys-397 disulfide bonds constitute the redox-active center. The Cys-94/Cys-99 disulfide bond may accept electron from P4HB and funnel them to the active site disulfide Cys-394/Cys-397. The regulatory Cys-99/Cys-104 disulfide bond stabilizes the other regulatory bond Cys-94/Cys-131. Post-translationally, phosphorylated on Ser-145 by FAM20C in the Golgi which increases its enzymatic activity. Phosphorylation is induced by lactation. It is also induced by hypoxia and reductive stress. As to expression, widely expressed at low level. Expressed at high level in upper digestive tract. Highly expressed in esophagus. Weakly expressed in stomach and duodenum.

It localises to the endoplasmic reticulum membrane. The protein resides in the golgi apparatus lumen. Its subcellular location is the secreted. The protein localises to the cell projection. It is found in the dendrite. With respect to regulation, enzyme activity is tightly regulated to prevent the accumulation of reactive oxygen species in the endoplasmic reticulum. Reversibly down-regulated by the formation of disulfide bonds between the active site Cys-94 and Cys-131, and between Cys-99 and Cys-104. Glutathione may be required to regulate its activity in the endoplasmic reticulum. Functionally, oxidoreductase involved in disulfide bond formation in the endoplasmic reticulum. Efficiently reoxidizes P4HB/PDI, the enzyme catalyzing protein disulfide formation, in order to allow P4HB to sustain additional rounds of disulfide formation. Following P4HB reoxidation, passes its electrons to molecular oxygen via FAD, leading to the production of reactive oxygen species (ROS) in the cell. Required for the proper folding of immunoglobulins. Plays an important role in ER stress-induced, CHOP-dependent apoptosis by activating the inositol 1,4,5-trisphosphate receptor IP3R1. Involved in the release of the unfolded cholera toxin from reduced P4HB/PDI in case of infection by V.cholerae, thereby playing a role in retrotranslocation of the toxin. This chain is ERO1-like protein alpha, found in Homo sapiens (Human).